The sequence spans 230 residues: MNSIEFPLIDRTTQNSVISTTLNDLSNWSRLSSLWPLLYGTSCCFIEFASLIGSRFDFDRYGLVPRSSPRQADLILTAGTVTMKMAPSLVRLYEQMPEPKYVIAMGACTITGGMFSTDSYSTVRGVDKLIPVDVYLPGCPPKPESILDAITKLRKKISREIHEDQTSSLSSQRENRCFTTNHKFYVERSTHTGNYDQVLFHQPPSTSEISSDTFFRYQKVQYPPRNEIVN.

4 residues coordinate [4Fe-4S] cluster: Cys-43, Cys-44, Cys-108, and Cys-139.

Belongs to the complex I 20 kDa subunit family. NDH is composed of at least 16 different subunits, 5 of which are encoded in the nucleus. The cofactor is [4Fe-4S] cluster.

It is found in the plastid. The protein localises to the chloroplast thylakoid membrane. It catalyses the reaction a plastoquinone + NADH + (n+1) H(+)(in) = a plastoquinol + NAD(+) + n H(+)(out). The catalysed reaction is a plastoquinone + NADPH + (n+1) H(+)(in) = a plastoquinol + NADP(+) + n H(+)(out). Its function is as follows. NDH shuttles electrons from NAD(P)H:plastoquinone, via FMN and iron-sulfur (Fe-S) centers, to quinones in the photosynthetic chain and possibly in a chloroplast respiratory chain. The immediate electron acceptor for the enzyme in this species is believed to be plastoquinone. Couples the redox reaction to proton translocation, and thus conserves the redox energy in a proton gradient. The polypeptide is NAD(P)H-quinone oxidoreductase subunit K, chloroplastic (Lotus japonicus (Lotus corniculatus var. japonicus)).